Here is an 820-residue protein sequence, read N- to C-terminus: Disintegrin and metalloproteinase domain-containing protein 29 (820 aa).

The N-terminal stretch at 1 to 18 (MKMLLLLHCLGVFLSCSG) is a signal peptide. Residues 19–193 (HIQDEHPQYH…TQKQSSYVGW (175 aa)) constitute a propeptide that is removed on maturation. Residues 194-674 (WIHFRIVEIV…GPPPKRKKKK (481 aa)) lie on the Extracellular side of the membrane. A Peptidase M12B domain is found at 198 to 390 (RIVEIVVVID…RTKCLLETVH (193 aa)). 2 N-linked (GlcNAc...) asparagine glycosylation sites follow: Asn217 and Asn320. 3 cysteine pairs are disulfide-bonded: Cys307–Cys384, Cys347–Cys369, and Cys349–Cys354. N-linked (GlcNAc...) asparagine glycosylation is found at Asn368, Asn428, Asn469, Asn538, Asn545, Asn558, and Asn564. Residues 397 to 483 (VKRCGNGVVE…KCPDDFYVED (87 aa)) form the Disintegrin domain. A disulfide bridge connects residues Cys455 and Cys475. 3 cysteine pairs are disulfide-bonded: Cys625/Cys636, Cys630/Cys642, and Cys644/Cys653. In terms of domain architecture, EGF-like spans 625-654 (CSPAFCNKRGICNNKHHCHCNYLWDPPNCL). Residues 675–695 (KFCYLCILLLIVLFILLCCLY) form a helical membrane-spanning segment. The Cytoplasmic portion of the chain corresponds to 696-820 (RLCKKSKPIK…SQSQPPVTPS (125 aa)). Residues 706–820 (KQQDVQTPSA…SQSQPPVTPS (115 aa)) are disordered. Residues 715 to 727 (AKEEEKIQRRPHE) are compositionally biased toward basic and acidic residues. Residues 738–820 (PSQSQPPVTP…SQSQPPVTPS (83 aa)) show a composition bias toward low complexity. 9 tandem repeats follow at residues 739 to 747 (SQSQPPVTP), 748 to 756 (SQSHPQVMP), 757 to 765 (SQSQPPVTP), 766 to 774 (SQSQPRVMP), 775 to 783 (SQSQPPVMP), 784 to 792 (SQSHPQLTP), 793 to 801 (SQSQPPVTP), 802 to 810 (SQRQPQLMP), and 811 to 819 (SQSQPPVTP). The 9 X 9 AA approximate repeats stretch occupies residues 739–819 (SQSQPPVTPS…PSQSQPPVTP (81 aa)).

As to expression, expressed specifically in testes.

It localises to the membrane. May be involved in spermatogenesis and fertilization. Seems to be a non catalytic metalloprotease-like protein. The chain is Disintegrin and metalloproteinase domain-containing protein 29 (ADAM29) from Homo sapiens (Human).